The following is a 333-amino-acid chain: L-lactate dehydrogenase B chain (333 aa).

Residues 29–57 (GQVGMACAISILGKRLGDELALVDVWEDK) and arginine 99 contribute to the NAD(+) site. The substrate site is built by arginine 106, asparagine 138, and arginine 169. Asparagine 138 is an NAD(+) binding site. Histidine 193 serves as the catalytic Proton acceptor. Position 248 (threonine 248) interacts with substrate.

Belongs to the LDH/MDH superfamily. LDH family. Homotetramer.

It is found in the cytoplasm. The enzyme catalyses (S)-lactate + NAD(+) = pyruvate + NADH + H(+). The protein operates within fermentation; pyruvate fermentation to lactate; (S)-lactate from pyruvate: step 1/1. Functionally, interconverts simultaneously and stereospecifically pyruvate and lactate with concomitant interconversion of NADH and NAD(+). In Alligator mississippiensis (American alligator), this protein is L-lactate dehydrogenase B chain (LDHB).